The primary structure comprises 482 residues: tRNA sulfurtransferase (482 aa).

A THUMP domain is found at 61-165 (LAIRDALTRI…DDRLLLIKGR (105 aa)). ATP contacts are provided by residues 183–184 (LI), Lys265, Gly287, and Gln296. A disulfide bond links Cys344 and Cys456. The 79-residue stretch at 404-482 (FGPNDVILDI…GFNNVKVYRP (79 aa)) folds into the Rhodanese domain. Cys456 serves as the catalytic Cysteine persulfide intermediate.

Belongs to the ThiI family.

It localises to the cytoplasm. The enzyme catalyses [ThiI sulfur-carrier protein]-S-sulfanyl-L-cysteine + a uridine in tRNA + 2 reduced [2Fe-2S]-[ferredoxin] + ATP + H(+) = [ThiI sulfur-carrier protein]-L-cysteine + a 4-thiouridine in tRNA + 2 oxidized [2Fe-2S]-[ferredoxin] + AMP + diphosphate. The catalysed reaction is [ThiS sulfur-carrier protein]-C-terminal Gly-Gly-AMP + S-sulfanyl-L-cysteinyl-[cysteine desulfurase] + AH2 = [ThiS sulfur-carrier protein]-C-terminal-Gly-aminoethanethioate + L-cysteinyl-[cysteine desulfurase] + A + AMP + 2 H(+). The protein operates within cofactor biosynthesis; thiamine diphosphate biosynthesis. In terms of biological role, catalyzes the ATP-dependent transfer of a sulfur to tRNA to produce 4-thiouridine in position 8 of tRNAs, which functions as a near-UV photosensor. Also catalyzes the transfer of sulfur to the sulfur carrier protein ThiS, forming ThiS-thiocarboxylate. This is a step in the synthesis of thiazole, in the thiamine biosynthesis pathway. The sulfur is donated as persulfide by IscS. The chain is tRNA sulfurtransferase from Escherichia coli O45:K1 (strain S88 / ExPEC).